Reading from the N-terminus, the 162-residue chain is Large ribosomal subunit protein eL24 (162 aa).

Disordered stretches follow at residues 64-83 (DIHA…PYSR) and 117-162 (ERIK…GGKR). Residues 71–81 (KKRRRTTKKPY) show a composition bias toward basic residues. Positions 117 to 135 (ERIKKTKDEKKAKKAEVTK) are enriched in basic and acidic residues.

Belongs to the eukaryotic ribosomal protein eL24 family.

It localises to the cytoplasm. The sequence is that of Large ribosomal subunit protein eL24 (RPL24) from Hordeum vulgare (Barley).